We begin with the raw amino-acid sequence, 682 residues long: Amphiphysin (682 aa).

Coiled-coil stretches lie at residues 10–84 and 144–191; these read AKNV…LHEV and DYDS…QEEL. The BAR domain maps to 24–240; the sequence is VLQKLGKADE…MTKLGDQHAD (217 aa). 4 disordered regions span residues 244 to 310, 446 to 470, 501 to 530, and 561 to 606; these read TIQG…PKLT, ILAE…ETTG, GAVR…QEKV, and AAAE…ASDM. Pro residues predominate over residues 261 to 274; sequence PSPPEEVSPLPSPT. The span at 503–527 shows a compositional bias: basic and acidic residues; sequence VRTEQEAAAEGDKPQGEEKDVDVSQ. The segment covering 567–596 has biased composition (polar residues); that stretch reads TQGTDSETSQIGSEQKATEEIQTTPSQDQP. The SH3 domain occupies 609 to 682; the sequence is GFLFKVEVLH…FPENFTRHLE (74 aa).

In terms of assembly, heterodimer with BIN1. Binds SH3GLB1. As to expression, is abundant in the forebrain and cerebellum. It is also found in the adrenal gland, anterior and posterior pituitary.

The protein localises to the cytoplasmic vesicle. It is found in the secretory vesicle. It localises to the synaptic vesicle membrane. Its subcellular location is the cytoplasm. The protein resides in the cytoskeleton. In terms of biological role, may participate in mechanisms of regulated exocytosis in synapses and certain endocrine cell types. May control the properties of the membrane associated cytoskeleton. The protein is Amphiphysin (AMPH) of Gallus gallus (Chicken).